A 266-amino-acid polypeptide reads, in one-letter code: 4-hydroxy-tetrahydrodipicolinate reductase (266 aa).

Residues 8-13 and Glu33 each bind NAD(+); that span reads GAAGRM. NADP(+) is bound at residue Arg34. NAD(+) contacts are provided by residues 97-99 and 121-124; these read GST and APNM. His154 serves as the catalytic Proton donor/acceptor. Position 155 (His155) interacts with (S)-2,3,4,5-tetrahydrodipicolinate. Lys158 acts as the Proton donor in catalysis. 164–165 serves as a coordination point for (S)-2,3,4,5-tetrahydrodipicolinate; sequence GT.

The protein belongs to the DapB family.

It is found in the cytoplasm. The enzyme catalyses (S)-2,3,4,5-tetrahydrodipicolinate + NAD(+) + H2O = (2S,4S)-4-hydroxy-2,3,4,5-tetrahydrodipicolinate + NADH + H(+). It catalyses the reaction (S)-2,3,4,5-tetrahydrodipicolinate + NADP(+) + H2O = (2S,4S)-4-hydroxy-2,3,4,5-tetrahydrodipicolinate + NADPH + H(+). Its pathway is amino-acid biosynthesis; L-lysine biosynthesis via DAP pathway; (S)-tetrahydrodipicolinate from L-aspartate: step 4/4. In terms of biological role, catalyzes the conversion of 4-hydroxy-tetrahydrodipicolinate (HTPA) to tetrahydrodipicolinate. This is 4-hydroxy-tetrahydrodipicolinate reductase from Trichlorobacter lovleyi (strain ATCC BAA-1151 / DSM 17278 / SZ) (Geobacter lovleyi).